A 210-amino-acid polypeptide reads, in one-letter code: Protein-L-isoaspartate O-methyltransferase (210 aa).

The active site involves serine 54.

Belongs to the methyltransferase superfamily. L-isoaspartyl/D-aspartyl protein methyltransferase family.

It localises to the cytoplasm. The enzyme catalyses [protein]-L-isoaspartate + S-adenosyl-L-methionine = [protein]-L-isoaspartate alpha-methyl ester + S-adenosyl-L-homocysteine. Catalyzes the methyl esterification of L-isoaspartyl residues in peptides and proteins that result from spontaneous decomposition of normal L-aspartyl and L-asparaginyl residues. It plays a role in the repair and/or degradation of damaged proteins. The chain is Protein-L-isoaspartate O-methyltransferase from Methanothrix thermoacetophila (strain DSM 6194 / JCM 14653 / NBRC 101360 / PT) (Methanosaeta thermophila).